Reading from the N-terminus, the 131-residue chain is MRHRKSGRQLNRNSSHRQAMFRNMACSIVRHEIIKTTVAKAKELRRVVEPLITLAKVDSVANRRLAFARTRDAEVVGKLFTELGPRFQERPGGYTRILKCGLRTGDKAPMAYIELVGRPEAAEAVEVEAAE.

Belongs to the bacterial ribosomal protein bL17 family. In terms of assembly, part of the 50S ribosomal subunit. Contacts protein L32.

This is Large ribosomal subunit protein bL17 from Shewanella frigidimarina (strain NCIMB 400).